Consider the following 43-residue polypeptide: Neurotrophin-3 (43 aa).

This sequence belongs to the NGF-beta family.

It is found in the secreted. In terms of biological role, seems to promote the survival of visceral and proprioceptive sensory neurons. The sequence is that of Neurotrophin-3 (ntf3) from Raja clavata (Thornback ray).